The following is a 129-amino-acid chain: Large ribosomal subunit protein bL12c (129 aa).

This sequence belongs to the bacterial ribosomal protein bL12 family. Homodimer. Part of the ribosomal stalk of the 50S ribosomal subunit. Forms a multimeric L10(L12)X complex, where L10 forms an elongated spine to which 2 to 4 L12 dimers bind in a sequential fashion. Binds GTP-bound translation factors.

Its subcellular location is the plastid. It localises to the chloroplast. Functionally, forms part of the ribosomal stalk which helps the ribosome interact with GTP-bound translation factors. Is thus essential for accurate translation. This Tupiella akineta (Green alga) protein is Large ribosomal subunit protein bL12c.